The primary structure comprises 115 residues: Ribosome-binding factor A (115 aa).

This sequence belongs to the RbfA family. In terms of assembly, monomer. Binds 30S ribosomal subunits, but not 50S ribosomal subunits or 70S ribosomes.

The protein resides in the cytoplasm. Functionally, one of several proteins that assist in the late maturation steps of the functional core of the 30S ribosomal subunit. Associates with free 30S ribosomal subunits (but not with 30S subunits that are part of 70S ribosomes or polysomes). Required for efficient processing of 16S rRNA. May interact with the 5'-terminal helix region of 16S rRNA. This is Ribosome-binding factor A from Streptococcus gordonii (strain Challis / ATCC 35105 / BCRC 15272 / CH1 / DL1 / V288).